We begin with the raw amino-acid sequence, 145 residues long: Large ribosomal subunit protein bL9 (145 aa).

Belongs to the bacterial ribosomal protein bL9 family.

Functionally, binds to the 23S rRNA. The protein is Large ribosomal subunit protein bL9 of Mesomycoplasma hyopneumoniae (strain 7448) (Mycoplasma hyopneumoniae).